Reading from the N-terminus, the 157-residue chain is Transcriptional repressor NrdR (157 aa).

The segment at 3 to 34 (CPFCNTVDTKVIDSRLVSEGSQIKRRRQCAIC) is a zinc-finger region. An ATP-cone domain is found at 49–139 (PRVIKNDDLL…VYRSFEDVRE (91 aa)).

The protein belongs to the NrdR family. Requires Zn(2+) as cofactor.

Its function is as follows. Negatively regulates transcription of bacterial ribonucleotide reductase nrd genes and operons by binding to NrdR-boxes. The protein is Transcriptional repressor NrdR of Hamiltonella defensa subsp. Acyrthosiphon pisum (strain 5AT).